The sequence spans 563 residues: MITSPSASRNSDTDLVWESSSSSSRNNSSAVASKPFLHSVPPSDPLRQANRLPIKILKMLTARTGHILHPEYLQPLPSTPVSPIELDAKKSPLALLAQTCSQIGKPDPPPSSKLSSVTSNGSSEKESKSGPLKLSDIGVEDKSSFKPYSKPADKKDSSSGVSSGEKSGFRVPSATCQPFTPRTGSPNSSTSASPMPSDGKGERDEKKDSDCNKNCSSDGSAPTSVSHSRISVSCAGINVEVNQHQETTSGSKASATSDSVSCVTSSSSASVLGSGLVAPVSPYKPGQTVFPLPPAGMTYPGSLAGAYAGYPQHFLPHGGSLVNAQLASSLGCSKAGSSPLAGASPPSIMSASLCRDPYCLSYHCASHLAGAAGASCTHDSAAAAAASALKSGYPLMYPTHPLHGVHSSPPSFGGHPLYPYGFMLPNDPLPHVCNWVSANGPCDKRFSSSEELLNHLRTHTAFTGTEKLISGYPSSSSLASAAAAAMACHMHMPPSGAPGSPGTLALRSPHHALGLSSRYHPYSKSPLPTPGAPVPVPAATGPYYSPYALYGQRLTTASALGYQ.

Positions methionine 1 to asparagine 10 are enriched in polar residues. Disordered stretches follow at residues methionine 1–glutamine 48 and serine 101–serine 226. Composition is skewed to low complexity over residues serine 19 to serine 33 and serine 112 to serine 122. Positions alanine 174–proline 194 are enriched in polar residues. The span at glycine 199–cysteine 211 shows a compositional bias: basic and acidic residues. The segment covering asparagine 212 to serine 226 has biased composition (polar residues). The segment at histidine 431–histidine 459 adopts a C2H2-type zinc-finger fold.

Belongs to the Elbow/Noc family. As to quaternary structure, interacts with nlz1.

It is found in the nucleus. Functionally, required for segmental gene expression during hindbrain development. May function as a transcriptional repressor. The protein is Zinc finger protein 503 (znf503) of Danio rerio (Zebrafish).